The chain runs to 92 residues: C-C motif chemokine 4 (92 aa).

The first 23 residues, 1-23 (MKLCVTVLSLLVLVAAFCSPALS), serve as a signal peptide directing secretion. Disulfide bonds link C34/C58 and C35/C74.

Belongs to the intercrine beta (chemokine CC) family. Homodimer. Interacts with CCR5.

The protein localises to the secreted. Monokine with inflammatory and chemokinetic properties. The polypeptide is C-C motif chemokine 4 (CCL4) (Sus scrofa (Pig)).